Here is a 266-residue protein sequence, read N- to C-terminus: Protein crossbronx-like (266 aa).

A UBC core domain is found at 15–178 (KQGYHILAEY…VQEQAIASRN (164 aa)).

It belongs to the ubiquitin-conjugating enzyme family. FTS subfamily.

The protein is Protein crossbronx-like of Drosophila yakuba (Fruit fly).